We begin with the raw amino-acid sequence, 113 residues long: Nucleoid-associated protein CLJ_B0037 (113 aa).

Positions 93-102 are enriched in basic and acidic residues; sequence EEDTSSEVKR. The disordered stretch occupies residues 93–113; sequence EEDTSSEVKRLTGGMNLPGMF.

Belongs to the YbaB/EbfC family. As to quaternary structure, homodimer.

It is found in the cytoplasm. It localises to the nucleoid. Its function is as follows. Binds to DNA and alters its conformation. May be involved in regulation of gene expression, nucleoid organization and DNA protection. The sequence is that of Nucleoid-associated protein CLJ_B0037 from Clostridium botulinum (strain 657 / Type Ba4).